A 191-amino-acid chain; its full sequence is MPVSLHPLVDNGITKGDANFPGGNLYCLCPQNKVTVAIKGNVAHNHACGCSKCWKPAGALFSVVGVVPKENLSVAANADKLEILDKAAAIQRYACKECGTHLFGRIEIDHPFKGLDFVHAELSDKKGWQEPQFAGFVSSIIEQGFHPNGMDEVRSKFQSLGLQTYDTLSPPLMDLIATYTGKKNGKLSANL.

In terms of domain architecture, CENP-V/GFA spans Phe20–Asp166. Zn(2+) is bound by residues Cys27, Cys29, Cys48, Cys50, Cys53, Cys95, and Cys98.

It belongs to the Gfa family. Zn(2+) is required as a cofactor.

It catalyses the reaction S-(hydroxymethyl)glutathione = glutathione + formaldehyde. The protein operates within one-carbon metabolism; formaldehyde degradation; formate from formaldehyde (glutathione route): step 1/3. Catalyzes the condensation of formaldehyde and glutathione to S-hydroxymethylglutathione. This is Putative glutathione-dependent formaldehyde-activating enzyme from Aspergillus flavus (strain ATCC 200026 / FGSC A1120 / IAM 13836 / NRRL 3357 / JCM 12722 / SRRC 167).